The following is a 97-amino-acid chain: Antitoxin TacA2 (97 aa).

Belongs to the TacA antitoxin family. In terms of assembly, homodimer. Forms a complex with cognate toxin TacT2.

Its function is as follows. Antitoxin component of a type II toxin-antitoxin (TA) system. Counteracts the toxic effect of cognate toxin TacT2. The TacA2-TacT2 complex both represses and derepresses expression of its own operon. This chain is Antitoxin TacA2, found in Salmonella enteritidis.